The chain runs to 301 residues: Small ribosomal subunit protein uS3 (301 aa).

The 69-residue stretch at 39–107 (VREYLKAKLK…PVAVNIEEVR (69 aa)) folds into the KH type-2 domain. The interval 211 to 301 (GESPGAKLDA…AAAADGTKTE (91 aa)) is disordered. A compositionally biased stretch (basic and acidic residues) spans 224–244 (DEERKPRGPRRDARPGSDRPA). Positions 245–257 (PRGARAPRAPAGG) are enriched in low complexity.

It belongs to the universal ribosomal protein uS3 family. In terms of assembly, part of the 30S ribosomal subunit. Forms a tight complex with proteins S10 and S14.

Its function is as follows. Binds the lower part of the 30S subunit head. Binds mRNA in the 70S ribosome, positioning it for translation. The chain is Small ribosomal subunit protein uS3 from Polaromonas sp. (strain JS666 / ATCC BAA-500).